A 203-amino-acid chain; its full sequence is Thymidylate kinase (203 aa).

Residue 7–14 (GPDGSGKS) participates in ATP binding.

This sequence belongs to the thymidylate kinase family.

The enzyme catalyses dTMP + ATP = dTDP + ADP. Functionally, phosphorylation of dTMP to form dTDP in both de novo and salvage pathways of dTTP synthesis. In Finegoldia magna (strain ATCC 29328 / DSM 20472 / WAL 2508) (Peptostreptococcus magnus), this protein is Thymidylate kinase.